We begin with the raw amino-acid sequence, 486 residues long: Glutamyl-tRNA(Gln) amidotransferase subunit A (486 aa).

Active-site charge relay system residues include lysine 78 and serine 153. Serine 177 (acyl-ester intermediate) is an active-site residue.

Belongs to the amidase family. GatA subfamily. As to quaternary structure, heterotrimer of A, B and C subunits.

It carries out the reaction L-glutamyl-tRNA(Gln) + L-glutamine + ATP + H2O = L-glutaminyl-tRNA(Gln) + L-glutamate + ADP + phosphate + H(+). Functionally, allows the formation of correctly charged Gln-tRNA(Gln) through the transamidation of misacylated Glu-tRNA(Gln) in organisms which lack glutaminyl-tRNA synthetase. The reaction takes place in the presence of glutamine and ATP through an activated gamma-phospho-Glu-tRNA(Gln). This chain is Glutamyl-tRNA(Gln) amidotransferase subunit A, found in Syntrophobacter fumaroxidans (strain DSM 10017 / MPOB).